Here is a 323-residue protein sequence, read N- to C-terminus: Annexin A3 (323 aa).

Residue A2 is modified to N-acetylalanine. Annexin repeat units follow at residues 18-89 (FSPS…ALVT), 90-161 (PPAV…TLAD), 173-245 (HLAK…AIVN), and 249-320 (NTPA…KICG). Position 267 is a phosphothreonine (T267).

This sequence belongs to the annexin family.

In terms of biological role, inhibitor of phospholipase A2, also possesses anti-coagulant properties. Also cleaves the cyclic bond of inositol 1,2-cyclic phosphate to form inositol 1-phosphate. The chain is Annexin A3 (ANXA3) from Homo sapiens (Human).